A 579-amino-acid chain; its full sequence is Aspartate--tRNA(Asp/Asn) ligase (579 aa).

Glu-171 provides a ligand contact to L-aspartate. Residues 195–198 (QLFK) form an aspartate region. Arg-217 lines the L-aspartate pocket. ATP-binding positions include 217-219 (RDE) and Gln-226. His-444 is an L-aspartate binding site. Glu-475 is a binding site for ATP. Arg-482 is an L-aspartate binding site. 527–530 (GLDR) contacts ATP.

This sequence belongs to the class-II aminoacyl-tRNA synthetase family. Type 1 subfamily. Homodimer.

It localises to the cytoplasm. It catalyses the reaction tRNA(Asx) + L-aspartate + ATP = L-aspartyl-tRNA(Asx) + AMP + diphosphate. Aspartyl-tRNA synthetase with relaxed tRNA specificity since it is able to aspartylate not only its cognate tRNA(Asp) but also tRNA(Asn). Reaction proceeds in two steps: L-aspartate is first activated by ATP to form Asp-AMP and then transferred to the acceptor end of tRNA(Asp/Asn). The sequence is that of Aspartate--tRNA(Asp/Asn) ligase from Thermotoga neapolitana (strain ATCC 49049 / DSM 4359 / NBRC 107923 / NS-E).